The sequence spans 206 residues: Large ribosomal subunit protein uL4 (206 aa).

The interval 44-77 (RQGTRAQKDRQTVKHSTKKPWRQKGTGRARAGMT) is disordered. The span at 56 to 70 (VKHSTKKPWRQKGTG) shows a compositional bias: basic residues.

It belongs to the universal ribosomal protein uL4 family. As to quaternary structure, part of the 50S ribosomal subunit.

Functionally, one of the primary rRNA binding proteins, this protein initially binds near the 5'-end of the 23S rRNA. It is important during the early stages of 50S assembly. It makes multiple contacts with different domains of the 23S rRNA in the assembled 50S subunit and ribosome. Its function is as follows. Forms part of the polypeptide exit tunnel. The polypeptide is Large ribosomal subunit protein uL4 (Methylibium petroleiphilum (strain ATCC BAA-1232 / LMG 22953 / PM1)).